Reading from the N-terminus, the 450-residue chain is UDP-N-acetylmuramoylalanine--D-glutamate ligase (450 aa).

Residue 115–121 (GTNGKTT) coordinates ATP.

Belongs to the MurCDEF family.

It localises to the cytoplasm. The enzyme catalyses UDP-N-acetyl-alpha-D-muramoyl-L-alanine + D-glutamate + ATP = UDP-N-acetyl-alpha-D-muramoyl-L-alanyl-D-glutamate + ADP + phosphate + H(+). It participates in cell wall biogenesis; peptidoglycan biosynthesis. Functionally, cell wall formation. Catalyzes the addition of glutamate to the nucleotide precursor UDP-N-acetylmuramoyl-L-alanine (UMA). The sequence is that of UDP-N-acetylmuramoylalanine--D-glutamate ligase from Caldanaerobacter subterraneus subsp. tengcongensis (strain DSM 15242 / JCM 11007 / NBRC 100824 / MB4) (Thermoanaerobacter tengcongensis).